We begin with the raw amino-acid sequence, 464 residues long: Peptidase inhibitor 16 (464 aa).

The signal sequence occupies residues 1–27 (MHGSGSLLACLLPPLLLLGAAPGPAGA). An SCP domain is found at 37–165 (VELHNLYRTQ…TNIHLLVCNY (129 aa)). An N-linked (GlcNAc...) asparagine glycan is attached at Asn114. 4 disordered regions span residues 208–241 (DLSSLVPEAPSSLATEASSSRREGIDSSLATEPP), 260–281 (VETKAPSSLVTEDSPSMATKTP), 304–347 (PATL…LMGT), and 386–412 (TTLKHKGHSSSKSLSNSPSASATANAV). Basic and acidic residues predominate over residues 311-325 (STHDPIPKSADKEAS). Positions 395–411 (SSKSLSNSPSASATANA) are enriched in low complexity.

This sequence belongs to the CRISP family. In terms of assembly, interacts with PSP94/MSMB. N-glycosylated.

The protein localises to the secreted. Its function is as follows. May inhibit cardiomyocyte growth. The protein is Peptidase inhibitor 16 (PI16) of Bos taurus (Bovine).